Reading from the N-terminus, the 198-residue chain is Thymidine kinase (198 aa).

Residues 16–23 and 89–92 each bind ATP; these read GGMYSGKS and EEGQ. Catalysis depends on Glu90, which acts as the Proton acceptor. Residues Cys146, Cys149, Cys184, and Cys187 each contribute to the Zn(2+) site.

It belongs to the thymidine kinase family. Homotetramer.

The protein resides in the cytoplasm. The enzyme catalyses thymidine + ATP = dTMP + ADP + H(+). The polypeptide is Thymidine kinase (Dictyoglomus thermophilum (strain ATCC 35947 / DSM 3960 / H-6-12)).